A 257-amino-acid polypeptide reads, in one-letter code: UPF0259 membrane protein WIGBR3650 (257 aa).

6 helical membrane-spanning segments follow: residues 23 to 43 (IIFF…IFLP), 89 to 109 (LSSL…INTI), 122 to 142 (IILS…ISFL), 148 to 168 (ALML…PILI), 190 to 210 (IKTV…ILVI), and 223 to 243 (VKIF…IYMY).

Belongs to the UPF0259 family.

It is found in the cell membrane. This is UPF0259 membrane protein WIGBR3650 from Wigglesworthia glossinidia brevipalpis.